A 416-amino-acid chain; its full sequence is Heat shock protein DDB_G0280215 (416 aa).

In terms of domain architecture, sHSP spans 37 to 150 (SMDWGWKPRM…SQHISLFGRE (114 aa)). The interval 216-235 (ETKERERRIRDTKGETEKKK) is disordered.

This sequence belongs to the small heat shock protein (HSP20) family.

This is Heat shock protein DDB_G0280215 from Dictyostelium discoideum (Social amoeba).